Consider the following 101-residue polypeptide: Small ribosomal subunit protein uS14 (101 aa).

The protein belongs to the universal ribosomal protein uS14 family. In terms of assembly, part of the 30S ribosomal subunit. Contacts proteins S3 and S10.

In terms of biological role, binds 16S rRNA, required for the assembly of 30S particles and may also be responsible for determining the conformation of the 16S rRNA at the A site. The sequence is that of Small ribosomal subunit protein uS14 from Shewanella sp. (strain ANA-3).